The following is a 129-amino-acid chain: IEENRQRRKREEMVRTLQTRPEPNTAEWELIRMVTEAHRHTNAQGSSWKQKRKFLSDDIGQGPVVPTSEGDKVDLEAFSEFTKIMTPAITRVVDFAKKLPMFSELPCEDQIILLKGCCMEIMSLRAAVR.

An NR LBD domain is found at 26 to 129; that stretch reads AEWELIRMVT…EIMSLRAAVR (104 aa). Arginine 91 lines the 3,3',5-triiodo-L-thyronine pocket.

Belongs to the nuclear hormone receptor family. NR1 subfamily.

Its subcellular location is the nucleus. Nuclear hormone receptor that can act as a repressor or activator of transcription. High affinity receptor for thyroid hormones, including triiodothyronine and thyroxine. This chain is Thyroid hormone receptor alpha (thra1), found in Sparus aurata (Gilthead sea bream).